The primary structure comprises 272 residues: NAD kinase (272 aa).

Residue aspartate 62 is the Proton acceptor of the active site. NAD(+)-binding positions include 62-63, arginine 67, 129-130, arginine 140, lysine 157, aspartate 159, isoleucine 167, 170-175, alanine 194, and glutamine 229; these read DG, NE, and SSYSSS.

The protein belongs to the NAD kinase family. A divalent metal cation is required as a cofactor.

Its subcellular location is the cytoplasm. The enzyme catalyses NAD(+) + ATP = ADP + NADP(+) + H(+). Its function is as follows. Involved in the regulation of the intracellular balance of NAD and NADP, and is a key enzyme in the biosynthesis of NADP. Catalyzes specifically the phosphorylation on 2'-hydroxyl of the adenosine moiety of NAD to yield NADP. The chain is NAD kinase from Thermoplasma acidophilum (strain ATCC 25905 / DSM 1728 / JCM 9062 / NBRC 15155 / AMRC-C165).